Reading from the N-terminus, the 145-residue chain is uncharacterized protein (145 aa).

A run of 3 helical transmembrane segments spans residues 3 to 23, 83 to 103, and 105 to 125; these read VGIILGILSAMGFLVFLGIGG, YVIDVGYSILFLVTLTLYLVP, and LSLLVWVTFFGATVFMIMLWI.

The protein localises to the cell membrane. This is an uncharacterized protein from Methanocaldococcus jannaschii (strain ATCC 43067 / DSM 2661 / JAL-1 / JCM 10045 / NBRC 100440) (Methanococcus jannaschii).